The following is a 654-amino-acid chain: Polyvinylalcohol dehydrogenase (654 aa).

Residues 1–32 (MGSHAWGGAVFSAATLIAFGSVVHASGTVAET) form the signal peptide. A Cytochrome c domain is found at 42–159 (ADQLDGETLY…AANQWNGWST (118 aa)). The heme c site is built by Cys55, Cys58, and His59.

This sequence belongs to the bacterial PQQ dehydrogenase family. Monomer. Pyrroloquinoline quinone serves as cofactor.

The protein resides in the periplasm. The catalysed reaction is a polyvinyl alcohol + 2n Fe(III)-[cytochrome c] = an oxidized polyvinyl alcohol + 2n Fe(II)-[cytochrome c] + 2n H(+). Functionally, catalyzes the oxidation of polyvinyl alcohol (PVA) in the polyvinyl alcohol degradation pathway. The chain is Polyvinylalcohol dehydrogenase (pvadh) from Sphingopyxis sp. (strain 113P3).